A 581-amino-acid polypeptide reads, in one-letter code: MSKQTYKVCFCFRRRFRYTASEAPREIKTIFEKYSENGVMTVDHLHRFLIDVQKQDKATREDAQSIINSASSLLHRNGLHLDAFFKYLFGDNNPPLALHKVHHDMDAPISHYFIFTGHNSYLTGNQLSSDCSEVPIIDALKKGVRVIELDIWPNSNKDDIDVLHGMTLTTPVGLIKCLKAIRAHAFDVSDYPVVVTLEDHLTPDLQSKVAEMVTEIFGEILFTPPVGESLKEFPSPNSLKRRIIISTKPPKEYKEGKDVEVVQKGKDLGDEEVWGREVPSFIQRNKSEAKDDLDGNDDDDDDDDEDKSKINAPPQYKHLIAIHAGKPKGGITECLKVDPDKVRRLSLSEEQLEKAAEKYAKQIVRFTQHNLLRIYPKGTRVTSSNYNPLVGWSHGAQMVAFNMQGYGRSLWLMQGMFRANGGCGYIKKPDLLLKSGSDSDIFDPKATLPVKTTLRVTVYMGEGWYFDFRHTHFDQYSPPDFYTRVGIAGVPGDTVMKKTKTLEDNWIPAWDEVFEFPLTVPELALLRLEVHEYDMSEKDDFGGQTCLPVWELSEGIRAFPLHSRKGEKYKSVKLLVKVEFV.

An EF-hand-like domain is found at 26–102 (EIKTIFEKYS…NPPLALHKVH (77 aa)). The PI-PLC X-box domain occupies 103-248 (HDMDAPISHY…LKRRIIISTK (146 aa)). Residues His118 and His164 contribute to the active site. Positions 279-314 (PSFIQRNKSEAKDDLDGNDDDDDDDDEDKSKINAPP) are disordered. Over residues 294 to 305 (DGNDDDDDDDDE) the composition is skewed to acidic residues. One can recognise a PI-PLC Y-box domain in the interval 317-433 (KHLIAIHAGK…GYIKKPDLLL (117 aa)). The C2 domain maps to 434–563 (KSGSDSDIFD…EGIRAFPLHS (130 aa)).

It depends on Ca(2+) as a cofactor. Phosphorylation level varies significantly during early response to bacterial elicitor. As to expression, expressed in roots, shoots, leaves and flowers.

It is found in the cell membrane. It catalyses the reaction a 1,2-diacyl-sn-glycero-3-phospho-(1D-myo-inositol-4,5-bisphosphate) + H2O = 1D-myo-inositol 1,4,5-trisphosphate + a 1,2-diacyl-sn-glycerol + H(+). In terms of biological role, the production of the second messenger molecules diacylglycerol (DAG) and inositol 1,4,5-trisphosphate (IP3) is mediated by activated phosphatidylinositol-specific phospholipase C enzymes. At physiological calcium concentration, the preferred substrate is phosphatidylinositol 4,5-bisphosphate versus phosphatidylinositol. The polypeptide is Phosphoinositide phospholipase C 2 (PLC2) (Arabidopsis thaliana (Mouse-ear cress)).